A 271-amino-acid polypeptide reads, in one-letter code: Glutamate racemase (271 aa).

Substrate-binding positions include 12–13 and 44–45; these read DS and YG. C75 serves as the catalytic Proton donor/acceptor. 76–77 is a substrate binding site; that stretch reads NT. The active-site Proton donor/acceptor is the C185. A substrate-binding site is contributed by 186-187; that stretch reads TH.

This sequence belongs to the aspartate/glutamate racemases family.

It carries out the reaction L-glutamate = D-glutamate. Its pathway is cell wall biogenesis; peptidoglycan biosynthesis. In terms of biological role, provides the (R)-glutamate required for cell wall biosynthesis. The sequence is that of Glutamate racemase from Mycobacterium marinum (strain ATCC BAA-535 / M).